Consider the following 215-residue polypeptide: Agamous-like MADS-box protein AGL63 (215 aa).

The MADS-box domain occupies 1 to 61 (MRKGKRVIKK…NRLYDFCSNS (61 aa)). In terms of domain architecture, K-box spans 90 to 178 (CSDCVKTKES…GSSWEQLMWQ (89 aa)). Disordered regions lie at residues 143–172 (ARKS…GSSW) and 184–215 (MTCQ…SSPP).

As to quaternary structure, forms homodimer. Interacts with AGL16. As to expression, expressed in bud pedicels, petals, anthers, style, ovary, seeds and embryos.

Its subcellular location is the nucleus. Its function is as follows. Probable transcription factor involved in the regulation of fruit growth. Contributes to integument development. Controls organ size via cell expansion. Involved in the regulation of longitudinal growth of the fruit evenly throughout the radial axis. Functions redundantly with TT16/AGL32 to repress nucellus growth and promote its degeneration. The sequence is that of Agamous-like MADS-box protein AGL63 from Arabidopsis thaliana (Mouse-ear cress).